The following is a 37-amino-acid chain: Cytochrome b6-f complex subunit 5 (37 aa).

The chain crosses the membrane as a helical span at residues 5–25 (LLSGIVLGMIPITLAGLFVTA).

This sequence belongs to the PetG family. In terms of assembly, the 4 large subunits of the cytochrome b6-f complex are cytochrome b6, subunit IV (17 kDa polypeptide, PetD), cytochrome f and the Rieske protein, while the 4 small subunits are PetG, PetL, PetM and PetN. The complex functions as a dimer.

It is found in the plastid. The protein resides in the chloroplast thylakoid membrane. Component of the cytochrome b6-f complex, which mediates electron transfer between photosystem II (PSII) and photosystem I (PSI), cyclic electron flow around PSI, and state transitions. PetG is required for either the stability or assembly of the cytochrome b6-f complex. In Mesostigma viride (Green alga), this protein is Cytochrome b6-f complex subunit 5.